A 318-amino-acid chain; its full sequence is Olfactory receptor 5M5 (318 aa).

At 1 to 31 (MLAPKKMVRGNYSMVTEFILLGLTDRPELQP) the chain is on the extracellular side. Asparagine 11 is a glycosylation site (N-linked (GlcNAc...) asparagine). Residues 32–52 (LLFVLFLVIYLITVGGNLGMM) traverse the membrane as a helical segment. Over 53–60 (VLIRIDSR) the chain is Cytoplasmic. A helical transmembrane segment spans residues 61–81 (LHTPMYYFLASLSCLDLCYST). Residues 82–105 (NVTPKMLVNFLSEKKTISYAACLV) lie on the Extracellular side of the membrane. A disulfide bridge links cysteine 103 with cysteine 195. A helical membrane pass occupies residues 106-126 (QCYFFIAMVITEYYMLAVMAY). The Cytoplasmic segment spans residues 127–139 (DRYMAICNPLLYS). The helical transmembrane segment at 140-160 (SKMSKGVCVRLIAGPYIYGFL) threads the bilayer. Topologically, residues 161–202 (SGLMETMWTYRLTFCGSNIINHFYCADPPLIRLSCSDTFIKE) are extracellular. Residues 203–223 (TSMFVVAGFNLSNSLFIILIS) form a helical membrane-spanning segment. At 224–243 (YLFILIAILRMRSAEGRRKA) the chain is on the cytoplasmic side. A helical transmembrane segment spans residues 244–264 (FSTCGSHLVAVTVFYGTLFCM). The Extracellular portion of the chain corresponds to 265 to 277 (YVRPPTDKSVEQS). The helical transmembrane segment at 278 to 298 (KIIAVFYTFVSPMLNPIIYSL) threads the bilayer. The Cytoplasmic portion of the chain corresponds to 299–318 (RNKDVKHAFWKLVRRNVLSK).

It belongs to the G-protein coupled receptor 1 family.

Its subcellular location is the cell membrane. Its function is as follows. Potential odorant receptor. This is Olfactory receptor 5M5 from Mus musculus (Mouse).